A 367-amino-acid chain; its full sequence is Peptide chain release factor 2 (367 aa).

Gln-254 carries the N5-methylglutamine modification.

It belongs to the prokaryotic/mitochondrial release factor family. In terms of processing, methylated by PrmC. Methylation increases the termination efficiency of RF2.

The protein resides in the cytoplasm. Its function is as follows. Peptide chain release factor 2 directs the termination of translation in response to the peptide chain termination codons UGA and UAA. The polypeptide is Peptide chain release factor 2 (Neisseria gonorrhoeae (strain ATCC 700825 / FA 1090)).